We begin with the raw amino-acid sequence, 397 residues long: Polyphosphatase (397 aa).

D41, D127, and H148 together coordinate Mg(2+). Mn(2+) is bound by residues D41, D127, and H148. H149, S286, and R381 together coordinate ATP.

Belongs to the PPase class C family. Requires Mn(2+) as cofactor. The cofactor is Mg(2+).

It catalyses the reaction [phosphate](n) + H2O = [phosphate](n-1) + phosphate + H(+). Its function is as follows. Polyphosphatase (polyPase) involved in the degradation of inorganic polyphosphates (polyP) that is able to degrade a range of chains from three to several hundreds of residues in a highly processive manner. Exclusively shows exopolyphosphatase activity, cleaving inside the polyP chain. In Saccharomyces cerevisiae (strain ATCC 204508 / S288c) (Baker's yeast), this protein is Polyphosphatase.